The chain runs to 242 residues: Probable transcriptional regulatory protein Cphy_2507 (242 aa).

The protein belongs to the TACO1 family.

The protein localises to the cytoplasm. The protein is Probable transcriptional regulatory protein Cphy_2507 of Lachnoclostridium phytofermentans (strain ATCC 700394 / DSM 18823 / ISDg) (Clostridium phytofermentans).